The following is a 305-amino-acid chain: Aspartate carbamoyltransferase catalytic subunit (305 aa).

Residues R56 and T57 each coordinate carbamoyl phosphate. K85 is a binding site for L-aspartate. Residues R106, H134, and Q137 each contribute to the carbamoyl phosphate site. Residues R167 and R227 each coordinate L-aspartate. Residues L266 and P267 each contribute to the carbamoyl phosphate site.

Belongs to the aspartate/ornithine carbamoyltransferase superfamily. ATCase family. Heterooligomer of catalytic and regulatory chains.

It carries out the reaction carbamoyl phosphate + L-aspartate = N-carbamoyl-L-aspartate + phosphate + H(+). The protein operates within pyrimidine metabolism; UMP biosynthesis via de novo pathway; (S)-dihydroorotate from bicarbonate: step 2/3. In terms of biological role, catalyzes the condensation of carbamoyl phosphate and aspartate to form carbamoyl aspartate and inorganic phosphate, the committed step in the de novo pyrimidine nucleotide biosynthesis pathway. In Thermoplasma volcanium (strain ATCC 51530 / DSM 4299 / JCM 9571 / NBRC 15438 / GSS1), this protein is Aspartate carbamoyltransferase catalytic subunit.